A 548-amino-acid polypeptide reads, in one-letter code: 1,3-beta-glucanosyltransferase gel4 (548 aa).

The first 25 residues, 1–25 (MKFVYAAAGASLVGSALATLPVIEA), serve as a signal peptide directing secretion. N-linked (GlcNAc...) asparagine glycans are attached at residues asparagine 51 and asparagine 69. Cysteine 88 and cysteine 117 are joined by a disulfide. (1,3-beta-D-glucosyl)n is bound by residues tyrosine 106, 133 to 141 (SAPSESINR), asparagine 174, and glutamate 175. The active-site Proton donor is the glutamate 175. Asparagine 181 is a glycosylation site (N-linked (GlcNAc...) asparagine). 2 residues coordinate (1,3-beta-D-glucosyl)n: aspartate 217 and arginine 222. 5 disulfide bridges follow: cysteine 231–cysteine 364, cysteine 249–cysteine 280, cysteine 386–cysteine 437, cysteine 395–cysteine 461, and cysteine 414–cysteine 419. The active-site Nucleophile is the glutamate 277. Tyrosine 309 lines the (1,3-beta-D-glucosyl)n pocket. Asparagine 425 carries N-linked (GlcNAc...) asparagine glycosylation. Residue alanine 519 is the site of GPI-like-anchor amidated alanine attachment. A propeptide spans 520–548 (SPMAVKVGNWQFGAYIATALFAGVGMLVL) (removed in mature form).

The protein belongs to the glycosyl hydrolase 72 family. The GPI-like anchor contains a phosphoceramide lipid group.

It is found in the cell membrane. Its function is as follows. Splits internally a 1,3-beta-glucan molecule and transfers the newly generated reducing end (the donor) to the non-reducing end of another 1,3-beta-glucan molecule (the acceptor) forming a 1,3-beta linkage, resulting in the elongation of 1,3-beta-glucan chains in the cell wall. Involved in cell wall morphogenesis. This is 1,3-beta-glucanosyltransferase gel4 (gel4) from Aspergillus fumigatus (strain ATCC MYA-4609 / CBS 101355 / FGSC A1100 / Af293) (Neosartorya fumigata).